The primary structure comprises 344 residues: 2,3,4,5-tetrahydropyridine-2,6-dicarboxylate N-succinyltransferase (344 aa).

A Mg(2+)-binding site is contributed by glutamate 205. Catalysis depends on glutamate 221, which acts as the Acyl-anhydride intermediate. Residues arginine 223, glycine 238, serine 241, alanine 264, 279–280, glycine 287, lysine 304, and 317–320 contribute to the succinyl-CoA site; these read EA and RRNS.

Belongs to the type 2 tetrahydrodipicolinate N-succinyltransferase family. As to quaternary structure, homotrimer.

It localises to the cytoplasm. It carries out the reaction (S)-2,3,4,5-tetrahydrodipicolinate + succinyl-CoA + H2O = (S)-2-succinylamino-6-oxoheptanedioate + CoA. Its pathway is amino-acid biosynthesis; L-lysine biosynthesis via DAP pathway; LL-2,6-diaminopimelate from (S)-tetrahydrodipicolinate (succinylase route): step 1/3. Functionally, catalyzes the conversion of the cyclic tetrahydrodipicolinate (THDP) into the acyclic N-succinyl-L-2-amino-6-oxopimelate using succinyl-CoA. The protein is 2,3,4,5-tetrahydropyridine-2,6-dicarboxylate N-succinyltransferase of Pseudomonas putida (strain ATCC 47054 / DSM 6125 / CFBP 8728 / NCIMB 11950 / KT2440).